The primary structure comprises 206 residues: Large ribosomal subunit protein uL4 (206 aa).

It belongs to the universal ribosomal protein uL4 family. As to quaternary structure, part of the 50S ribosomal subunit.

Functionally, one of the primary rRNA binding proteins, this protein initially binds near the 5'-end of the 23S rRNA. It is important during the early stages of 50S assembly. It makes multiple contacts with different domains of the 23S rRNA in the assembled 50S subunit and ribosome. Forms part of the polypeptide exit tunnel. The polypeptide is Large ribosomal subunit protein uL4 (Cereibacter sphaeroides (strain ATCC 17025 / ATH 2.4.3) (Rhodobacter sphaeroides)).